The following is a 690-amino-acid chain: Elongation factor G (690 aa).

The region spanning 8 to 282 (ERVRNIGIAA…AVIDYLPAPV (275 aa)) is the tr-type G domain. Residues 17 to 24 (AHIDAGKT), 81 to 85 (DTPGH), and 135 to 138 (NKMD) contribute to the GTP site.

It belongs to the TRAFAC class translation factor GTPase superfamily. Classic translation factor GTPase family. EF-G/EF-2 subfamily.

The protein resides in the cytoplasm. Its function is as follows. Catalyzes the GTP-dependent ribosomal translocation step during translation elongation. During this step, the ribosome changes from the pre-translocational (PRE) to the post-translocational (POST) state as the newly formed A-site-bound peptidyl-tRNA and P-site-bound deacylated tRNA move to the P and E sites, respectively. Catalyzes the coordinated movement of the two tRNA molecules, the mRNA and conformational changes in the ribosome. This is Elongation factor G from Parasynechococcus marenigrum (strain WH8102).